A 542-amino-acid chain; its full sequence is Phosphoglucomutase (542 aa).

Substrate-binding positions include Thr-17, Arg-21, Ser-112–His-113, and Lys-125. The Phosphoserine intermediate role is filled by Ser-112. Residue Ser-112 participates in Mg(2+) binding. Positions 276, 278, and 280 each coordinate Mg(2+). Substrate is bound by residues Asp-280–Arg-281, Thr-343, Glu-362–Ser-364, Lys-375, and Arg-495.

The protein belongs to the phosphohexose mutase family. The cofactor is Mg(2+).

The enzyme catalyses alpha-D-glucose 1-phosphate = alpha-D-glucose 6-phosphate. This enzyme participates in both the breakdown and synthesis of glucose. Required for the synthesis of capsular polysaccharide and normal lipopolysaccharide. The sequence is that of Phosphoglucomutase (pgm) from Rhizobium radiobacter (Agrobacterium tumefaciens).